Reading from the N-terminus, the 329-residue chain is Vacuolar protein sorting-associated protein 26B-like (329 aa).

It belongs to the VPS26 family.

The protein resides in the cytoplasm. The protein localises to the membrane. Its function is as follows. Probable component of the retromer complex, a complex required to retrieve lysosomal enzyme receptors (IGF2R and M6PR) from endosomes to the trans-Golgi network. This chain is Vacuolar protein sorting-associated protein 26B-like (vps26bl), found in Danio rerio (Zebrafish).